Consider the following 432-residue polypeptide: Peptidase B (432 aa).

2 residues coordinate Mn(2+): lysine 196 and aspartate 201. The active site involves lysine 208. Residues aspartate 219, aspartate 278, and glutamate 280 each coordinate Mn(2+). Arginine 282 is an active-site residue.

This sequence belongs to the peptidase M17 family. As to quaternary structure, homohexamer. Requires Mn(2+) as cofactor.

It is found in the cytoplasm. It carries out the reaction Release of an N-terminal amino acid, Xaa, from a peptide or arylamide. Xaa is preferably Glu or Asp but may be other amino acids, including Leu, Met, His, Cys and Gln.. Its function is as follows. Probably plays an important role in intracellular peptide degradation. The sequence is that of Peptidase B from Vibrio parahaemolyticus serotype O3:K6 (strain RIMD 2210633).